Here is a 105-residue protein sequence, read N- to C-terminus: Oxytocin-neurophysin 1 (105 aa).

A disulfide bridge connects residues C1 and C6. G9 carries the glycine amide modification. 7 cysteine pairs are disulfide-bonded: C22-C66, C25-C39, C33-C56, C40-C46, C73-C85, C79-C97, and C86-C91.

Belongs to the vasopressin/oxytocin family. As to quaternary structure, interacts with oxytocin receptor (Ki=1.5 nM). Interacts with vasopressin V1aR/AVPR1A (Ki=37 nM), V1bR/AVPR1B (Ki=222 nM), and V2R/AVPR2 receptors (Ki=823 nM).

The protein localises to the secreted. In terms of biological role, neurophysin 1 specifically binds oxytocin. Its function is as follows. Oxytocin causes contraction of the smooth muscle of the uterus and of the mammary gland. Acts by binding to oxytocin receptor (OXTR). This Equus caballus (Horse) protein is Oxytocin-neurophysin 1 (OXT).